The primary structure comprises 210 residues: Somatotropin-2 (210 aa).

The N-terminal stretch at 1-22 (MGQVFLLMPVLLVSCFLSQGAA) is a signal peptide. His38 is a binding site for Zn(2+). Cys71 and Cys183 form a disulfide bridge. Glu192 contributes to the Zn(2+) binding site. An intrachain disulfide couples Cys200 to Cys208.

The protein belongs to the somatotropin/prolactin family.

Its subcellular location is the secreted. In terms of biological role, growth hormone plays an important role in growth control and is involved in the regulation of several anabolic processes. Implicated as an osmoregulatory substance important for seawater adaptation. The protein is Somatotropin-2 (gh2) of Oncorhynchus nerka (Sockeye salmon).